The following is a 102-amino-acid chain: Large ribosomal subunit protein uL24 (102 aa).

It belongs to the universal ribosomal protein uL24 family. Part of the 50S ribosomal subunit.

One of two assembly initiator proteins, it binds directly to the 5'-end of the 23S rRNA, where it nucleates assembly of the 50S subunit. Its function is as follows. One of the proteins that surrounds the polypeptide exit tunnel on the outside of the subunit. The polypeptide is Large ribosomal subunit protein uL24 (Alkaliphilus oremlandii (strain OhILAs) (Clostridium oremlandii (strain OhILAs))).